Reading from the N-terminus, the 425-residue chain is Histidine--tRNA ligase (425 aa).

The protein belongs to the class-II aminoacyl-tRNA synthetase family. As to quaternary structure, homodimer.

The protein resides in the cytoplasm. It catalyses the reaction tRNA(His) + L-histidine + ATP = L-histidyl-tRNA(His) + AMP + diphosphate + H(+). The chain is Histidine--tRNA ligase from Listeria innocua serovar 6a (strain ATCC BAA-680 / CLIP 11262).